The following is a 91-amino-acid chain: Transcriptional repressor FrmR (91 aa).

The protein belongs to the FrmR/RcnR family. As to quaternary structure, homotetramer.

The protein localises to the cytoplasm. In terms of biological role, formaldehyde sensor. In the absence of formaldehyde, mediates repression of the frmRAB operon. Acts by binding directly to the frmRAB promoter region. In the presence of formaldehyde, it dissociates from the frmRAB promoter region and allows expression of the formaldehyde detoxification system encoded by frmA and frmB. The polypeptide is Transcriptional repressor FrmR (Escherichia coli (strain UTI89 / UPEC)).